The sequence spans 548 residues: Isocitrate dehydrogenase [NAD(+)] 1, mitochondrial (548 aa).

The N-terminal 53 residues, 1–53, are a transit peptide targeting the mitochondrion; sequence MSSLSTLRILHSTAGRRWASYYGIYPKSAACSSSSVAIARFFSTAADRPPKHA. NAD(+)-binding positions include 132 to 134 and Asn-153; that span reads TIT. D-threo-isocitrate-binding positions include 151–157, Arg-187, Tyr-194, Lys-266, Asp-311, and Asp-335; that span reads SPNGAMR. Mg(2+) contacts are provided by Asp-311, Asp-335, and Asp-339. NAD(+) is bound by residues 372-377 and Asn-391; that span reads HGTVSD. Residues 499 to 534 enclose the EF-hand domain; the sequence is IDEEAINGLFQKYDKNGDGFIDFEEFTRMLVKMNLA. Asp-512, Asn-514, Asp-516, Phe-518, and Glu-523 together coordinate Ca(2+).

The protein belongs to the isocitrate and isopropylmalate dehydrogenases family. Homodimer. Requires Mg(2+) as cofactor. The cofactor is Mn(2+).

The protein localises to the mitochondrion. It carries out the reaction D-threo-isocitrate + NAD(+) = 2-oxoglutarate + CO2 + NADH. Its activity is regulated as follows. The homodimer exhibits allosteric regulation by isocitrate. Activated by Mn(2+) and Mg(2+). No activation by Na(+), K(+) or Li(+). Inhibited by Co(2+), Cu(2+) and Ni(2+), but not with Ca(2+) in the presence of Mn(2+) or Mg(2+). Competitively inhibited by NADH, but no effect on activity by 1.0 mM citrate. Strongly inhibited by excess ATP, ADP, AMP and alpha-ketoglutarate. In terms of biological role, performs an essential role in the oxidative function of the tricarboxylic acid cycle and respiration. Catalyzes the decarboxylation of isocitrate to produce 2-oxoglutarate and generate NADH to provide electrons for energy production. No activity with NADP(+). The protein is Isocitrate dehydrogenase [NAD(+)] 1, mitochondrial of Phaeodactylum tricornutum (strain CCAP 1055/1).